An 87-amino-acid chain; its full sequence is NADH-ubiquinone oxidoreductase chain 4L (87 aa).

3 helical membrane passes run 1–21 (MNLS…NRKN), 22–42 (IILM…LVLI), and 57–77 (LYII…LVAF).

It belongs to the complex I subunit 4L family. As to quaternary structure, core subunit of respiratory chain NADH dehydrogenase (Complex I) which is composed of 45 different subunits.

It is found in the mitochondrion inner membrane. It carries out the reaction a ubiquinone + NADH + 5 H(+)(in) = a ubiquinol + NAD(+) + 4 H(+)(out). Core subunit of the mitochondrial membrane respiratory chain NADH dehydrogenase (Complex I) which catalyzes electron transfer from NADH through the respiratory chain, using ubiquinone as an electron acceptor. This is NADH-ubiquinone oxidoreductase chain 4L (ND4L) from Moniliophthora perniciosa (strain FA553 / isolate CP02) (Witches'-broom disease fungus).